A 119-amino-acid polypeptide reads, in one-letter code: Protein yippee-like 1 (119 aa).

One can recognise a Yippee domain in the interval 19–116 (RTYSCIHCRA…IELAHMIKDN (98 aa)). Zn(2+) contacts are provided by C23, C26, C79, and C82. A Nuclear localization signal motif is present at residues 99-104 (KYKEGK).

It belongs to the yippee family.

Its subcellular location is the nucleus. May play a role in epithelioid conversion of fibroblasts. This Chlorocebus aethiops (Green monkey) protein is Protein yippee-like 1 (YPEL1).